The sequence spans 320 residues: Citrate synthase (320 aa).

Active-site residues include histidine 249 and aspartate 307.

The protein belongs to the citrate synthase family.

The catalysed reaction is oxaloacetate + acetyl-CoA + H2O = citrate + CoA + H(+). The protein operates within carbohydrate metabolism; tricarboxylic acid cycle; isocitrate from oxaloacetate: step 1/2. The protein is Citrate synthase (gltA) of Bartonella doshiae.